Reading from the N-terminus, the 279-residue chain is Odontogenic ameloblast-associated protein (279 aa).

Positions 1 to 15 (MKIIILLGFLGATLS) are cleaved as a signal peptide. O-linked (GalNAc...) threonine glycosylation is found at T115 and T119. The interval 127–129 (MPY) is interaction with ARHGEF5. Residues 243 to 263 (STSPKPSTTNVFTSAVDQTIT) are compositionally biased toward polar residues. The interval 243–279 (STSPKPSTTNVFTSAVDQTITPELPEEKDKTDSLREP) is disordered. Residue T244 is glycosylated (O-linked (GalNAc...) threonine). S249 carries O-linked (GalNAc...) serine glycosylation. Residues T250, T251, and T255 are each glycosylated (O-linked (GalNAc...) threonine). The O-linked (GalNAc...) serine glycan is linked to S256. Residues T261, T263, and T273 are each glycosylated (O-linked (GalNAc...) threonine). Residues 267 to 279 (PEEKDKTDSLREP) show a composition bias toward basic and acidic residues. S275 carries O-linked (GalNAc...) serine glycosylation.

The protein belongs to the ODAM family. In terms of assembly, interacts (via C-terminus) with ARHGEF5. Post-translationally, O-glycosylated. As to expression, expressed in the junctional epithelium of healthy teeth. In periodontitis, absent in the pocket epithelium of the diseased periodontium but is detected in the gingival crevicular fluid.

It localises to the secreted. The protein resides in the cytoplasm. The protein localises to the nucleus. Tooth-associated epithelia protein that probably plays a role in odontogenesis, the complex process that results in the initiation and generation of the tooth. May be incorporated in the enamel matrix at the end of mineralization process. Involved in the induction of RHOA activity via interaction with ARHGEF and expression of downstream factors such as ROCK. Plays a role in attachment of the junctional epithelium to the tooth surface. This chain is Odontogenic ameloblast-associated protein (ODAM), found in Homo sapiens (Human).